A 529-amino-acid polypeptide reads, in one-letter code: Bifunctional purine biosynthesis protein PurH (529 aa).

Residues 3–149 form the MGS-like domain; sequence DRIPLKRALI…KNHAFVTVVV (147 aa).

The protein belongs to the PurH family.

It carries out the reaction (6R)-10-formyltetrahydrofolate + 5-amino-1-(5-phospho-beta-D-ribosyl)imidazole-4-carboxamide = 5-formamido-1-(5-phospho-D-ribosyl)imidazole-4-carboxamide + (6S)-5,6,7,8-tetrahydrofolate. It catalyses the reaction IMP + H2O = 5-formamido-1-(5-phospho-D-ribosyl)imidazole-4-carboxamide. It participates in purine metabolism; IMP biosynthesis via de novo pathway; 5-formamido-1-(5-phospho-D-ribosyl)imidazole-4-carboxamide from 5-amino-1-(5-phospho-D-ribosyl)imidazole-4-carboxamide (10-formyl THF route): step 1/1. Its pathway is purine metabolism; IMP biosynthesis via de novo pathway; IMP from 5-formamido-1-(5-phospho-D-ribosyl)imidazole-4-carboxamide: step 1/1. In Paracoccus denitrificans (strain Pd 1222), this protein is Bifunctional purine biosynthesis protein PurH.